Here is a 909-residue protein sequence, read N- to C-terminus: Short transient receptor potential channel 3 (909 aa).

Positions 1–92 are disordered; that stretch reads MSTKVKKCRE…VRGPAFMFGA (92 aa). The Cytoplasmic segment spans residues 1–447; it reads MSTKVKKCRE…KILRSPFMKF (447 aa). The span at 19 to 28 shows a compositional bias: acidic residues; sequence PEEEDGEAEG. A compositionally biased stretch (pro residues) spans 47–57; the sequence is PPCPRAPPSPG. Over residues 58 to 67 the composition is skewed to low complexity; the sequence is PDASSEGSPS. ANK repeat units follow at residues 99-128, 134-163, 165-191, and 220-249; these read AEEE…TLNV, MGQN…LARI, DALL…FAAS, and PDIT…RIER. Residue Glu-146 participates in Ca(2+) binding. A helical membrane pass occupies residues 448–465; sequence VAHAASFIIFLGLLVFNA. At 466–496 the chain is on the extracellular side; it reads SDRFEGITTLPNITVIDYPKQIFRVKTTQFT. N-linked (GlcNAc...) asparagine glycosylation is present at Asn-477. The chain crosses the membrane as a helical span at residues 497–515; that stretch reads WTEMLIMVWVLGMMWSECK. Residues Glu-513, Glu-516, and Asn-531 each coordinate Ca(2+). Topologically, residues 516–528 are cytoplasmic; that stretch reads ELWLEGPREYIVQ. Residues 529 to 550 traverse the membrane as a helical segment; sequence LWNVLDFGMLSIFIAAFTARFL. Topologically, residues 551 to 594 are extracellular; sequence AFLQATKAQQYVDSHVQESDLSEVTLPPEVQYFTYARDKWLPSD. A helical membrane pass occupies residues 595–618; it reads PQIISEGLYAIAVVLSFSRIAYIL. Residues 619–637 are Cytoplasmic-facing; it reads PANESFGPLQISLGRTVKD. An ANK 5 repeat occupies 622-651; sequence ESFGPLQISLGRTVKDIFKFMVLFIMVFLA. A helical membrane pass occupies residues 638 to 661; the sequence is IFKFMVLFIMVFLAFMIGMFILYS. Over 662–701 the chain is Extracellular; it reads YYLGAKVNPAFTTVEESFKTLFWSIFGLSEVTSVVLKYDH. A helical membrane pass occupies residues 702 to 727; that stretch reads KFIENIGYVLYGIYNVTMVVVLLNML. At 728-909 the chain is on the cytoplasmic side; it reads IAMINSSYQE…KLNPSALRCE (182 aa). Residues Glu-859, Glu-862, Glu-864, and Asp-871 each contribute to the Ca(2+) site.

It belongs to the transient receptor (TC 1.A.4) family. STrpC subfamily. TRPC3 sub-subfamily. As to quaternary structure, homotetramer. Interacts with ITPR1, ITPR3, MX1 and RNF24. Interacts with JPH2; the interaction is involved in maintaining Ca(2+) homeostasis in skeletal muscle and is mediated by JPH2 'Ser-165' phosphorylation.

The protein resides in the cell membrane. It catalyses the reaction Ca(2+)(in) = Ca(2+)(out). With respect to regulation, activated by diacylglycerol (DAG) in a membrane-delimited fashion, independently of protein kinase C. Activated by inositol 1,4,5-triphosphate receptors (ITPR) with bound IP3. May be activated by internal calcium store depletion. Inhibited by intracellular Ca(2+). Forms a receptor-activated non-selective calcium permeant cation channel. May be operated by a phosphatidylinositol second messenger system activated by receptor tyrosine kinases or G-protein coupled receptors. This Rattus norvegicus (Rat) protein is Short transient receptor potential channel 3 (Trpc3).